A 410-amino-acid chain; its full sequence is ORC1-type DNA replication protein 2 (410 aa).

ATP is bound by residues 60–65, tyrosine 213, and arginine 225; that span reads GIGKTT.

This sequence belongs to the CDC6/cdc18 family.

In terms of biological role, involved in regulation of DNA replication. Binds DNA. The polypeptide is ORC1-type DNA replication protein 2 (orc2) (Aeropyrum pernix (strain ATCC 700893 / DSM 11879 / JCM 9820 / NBRC 100138 / K1)).